The following is an 856-amino-acid chain: FO synthase (856 aa).

Radical SAM core domains are found at residues 84–336 and 544–785; these read ISYS…APPN and VTFV…SHIQ. The interval 85-417 is cofG-like; it reads SYSRKVFIPV…PRVRGHVVAL (333 aa). C98, C102, C105, C558, C562, and C565 together coordinate [4Fe-4S] cluster. Residues 521-854 are cofH-like; the sequence is DGPALEAVAA…RQRTTTYALL (334 aa).

This sequence in the N-terminal section; belongs to the radical SAM superfamily. CofG family. It in the C-terminal section; belongs to the radical SAM superfamily. CofH family. The cofactor is [4Fe-4S] cluster.

It carries out the reaction 5-amino-6-(D-ribitylamino)uracil + L-tyrosine + S-adenosyl-L-methionine = 5-amino-5-(4-hydroxybenzyl)-6-(D-ribitylimino)-5,6-dihydrouracil + 2-iminoacetate + 5'-deoxyadenosine + L-methionine + H(+). The enzyme catalyses 5-amino-5-(4-hydroxybenzyl)-6-(D-ribitylimino)-5,6-dihydrouracil + S-adenosyl-L-methionine = 7,8-didemethyl-8-hydroxy-5-deazariboflavin + 5'-deoxyadenosine + L-methionine + NH4(+) + H(+). It functions in the pathway cofactor biosynthesis; coenzyme F0 biosynthesis. Its function is as follows. Catalyzes the radical-mediated synthesis of 7,8-didemethyl-8-hydroxy-5-deazariboflavin (FO) from 5-amino-6-(D-ribitylamino)uracil and L-tyrosine. This is FO synthase (fbiC) from Mycobacterium bovis (strain ATCC BAA-935 / AF2122/97).